The following is a 575-amino-acid chain: UvrABC system protein C (575 aa).

A GIY-YIG domain is found at 16–94 (SQPGVYRMYD…IKLYQPRYNV (79 aa)). Positions 204-239 (DQVLTQLISRMETASQNLEFEEAARIRDQIQAVRRV) constitute a UVR domain.

This sequence belongs to the UvrC family. Interacts with UvrB in an incision complex.

It localises to the cytoplasm. The UvrABC repair system catalyzes the recognition and processing of DNA lesions. UvrC both incises the 5' and 3' sides of the lesion. The N-terminal half is responsible for the 3' incision and the C-terminal half is responsible for the 5' incision. The sequence is that of UvrABC system protein C from Shigella dysenteriae serotype 1 (strain Sd197).